A 90-amino-acid polypeptide reads, in one-letter code: NELL2-interacting cell ontogeny regulator 1 (90 aa).

The signal sequence occupies residues 1–26 (MVSSGYLQAVMLLLAVQLLCFRPSDA).

This sequence belongs to the NICOL family.

It localises to the secreted. Its function is as follows. mRNA-binding protein which interacts with a range of target mRNAs and may promote extracellular matrix production. This chain is NELL2-interacting cell ontogeny regulator 1, found in Salmo salar (Atlantic salmon).